The primary structure comprises 59 residues: Kunitz-type serine protease inhibitor BmKTT-1 (59 aa).

Residues 4 to 54 enclose the BPTI/Kunitz inhibitor domain; that stretch reads CSLPVDTGRGKGWFLRYYYNKNSKTCESFIYGGVGGNKNNFLNIENCCKIC. Cystine bridges form between C4–C54, C29–C50, and C51–C59.

Belongs to the venom Kunitz-type family. Scorpion delta-Ktx subfamily. Delta-Ktx 2 sub-subfamily. Expressed by the venom gland.

Its subcellular location is the secreted. Its function is as follows. Dual-function toxin that completely inhibits trypsin activity at a molar ratio of 1:1 (Ki=136 nM) and that inhibits mKv1.3/KCNA3 potassium channel currents (IC(50)=129.7 nM). This is Kunitz-type serine protease inhibitor BmKTT-1 from Olivierus martensii (Manchurian scorpion).